Consider the following 345-residue polypeptide: N-acetyl-gamma-glutamyl-phosphate reductase (345 aa).

The active site involves Cys149.

Belongs to the NAGSA dehydrogenase family. Type 1 subfamily.

Its subcellular location is the cytoplasm. The enzyme catalyses N-acetyl-L-glutamate 5-semialdehyde + phosphate + NADP(+) = N-acetyl-L-glutamyl 5-phosphate + NADPH + H(+). The protein operates within amino-acid biosynthesis; L-arginine biosynthesis; N(2)-acetyl-L-ornithine from L-glutamate: step 3/4. Functionally, catalyzes the NADPH-dependent reduction of N-acetyl-5-glutamyl phosphate to yield N-acetyl-L-glutamate 5-semialdehyde. In Halalkalibacterium halodurans (strain ATCC BAA-125 / DSM 18197 / FERM 7344 / JCM 9153 / C-125) (Bacillus halodurans), this protein is N-acetyl-gamma-glutamyl-phosphate reductase.